Here is a 72-residue protein sequence, read N- to C-terminus: Large ribosomal subunit protein uL29 (72 aa).

Belongs to the universal ribosomal protein uL29 family.

The sequence is that of Large ribosomal subunit protein uL29 (rpmC) from Treponema pallidum (strain Nichols).